We begin with the raw amino-acid sequence, 291 residues long: MEKLAASTEPQGPRPVLGRESVQVPDDQDFRSFRSECEAEVGWNLTYSRAGVSVWVQAVEMDRTLHKIKCRMECCDVPAETLYDVLHDIEYRKKWDSNVIETFDIARLTVNADVGYYSWRCPKPLKNRDVITLRSWLPMGADYIIMNYSVKHPKYPPRKDLVRAVSIQTGYLIQSTGPKSCVITYLAQVDPKGSLPKWVVNKSSQFLAPKAMKKMYKACLKYPEWKQKHLPHFKPWLHPEQSPLPSLALSELSVQHADSLENIDESAVAESREERMGGAGGEGSDDDTSLT.

Methionine 1 carries the post-translational modification N-acetylmethionine. The tract at residues 1–20 (MEKLAASTEPQGPRPVLGRE) is disordered. Residues 14 to 224 (RPVLGRESVQ…MYKACLKYPE (211 aa)) form the START domain. An N6-succinyllysine mark is found at lysine 94, lysine 197, and lysine 202. A phosphoserine mark is found at serine 253 and serine 259. Residues 260-291 (LENIDESAVAESREERMGGAGGEGSDDDTSLT) are disordered. Serine 284 carries the phosphoserine; by CK2 modification. Position 289 is a phosphoserine (serine 289).

In terms of processing, phosphorylation at Ser-284 by CK2 negatively regulates lipid transfer activity, possibly by decreasing membrane association.

It localises to the cell projection. Its subcellular location is the cilium. The protein resides in the flagellum. It is found in the cytoplasm. The protein localises to the membrane. Its function is as follows. May play metabolic roles in sperm maturation or fertilization. Phospholipid transfer protein that preferentially selects lipid species containing a palmitoyl or stearoyl chain on the sn-1 and an unsaturated fatty acyl chain (18:1 or 18:2) on the sn-2 position. Able to transfer phosphatidylcholine (PC) and phosphatidyetanolamline (PE) between membranes. The chain is START domain-containing protein 10 (STARD10) from Homo sapiens (Human).